The primary structure comprises 611 residues: Poly(3-hydroxyalkanoate) polymerase subunit PhaC (611 aa).

Residue cysteine 349 is part of the active site.

This sequence belongs to the PHA/PHB synthase family. Type I PhaC subfamily. In terms of assembly, monomer.

It localises to the cytoplasm. It carries out the reaction (3R)-3-hydroxybutanoyl-CoA + [(3R)-hydroxybutanoate](n) = [(3R)-hydroxybutanoate](n+1) + CoA. It functions in the pathway biopolymer metabolism; poly-(R)-3-hydroxybutanoate biosynthesis. In terms of biological role, polymerizes D(-)-3-hydroxybutyryl-CoA to create PHB which consists of thousands of hydroxybutyrate molecules linked end to end. PHB serves as an intracellular energy reserve material when cells grow under conditions of nutrient limitation. The protein is Poly(3-hydroxyalkanoate) polymerase subunit PhaC of Rhizobium meliloti (strain 1021) (Ensifer meliloti).